The chain runs to 227 residues: Flagellar L-ring protein 2 (227 aa).

The N-terminal stretch at 1–17 (MKSKLAITMVSALLLAA) is a signal peptide. C18 carries N-palmitoyl cysteine lipidation. C18 carries S-diacylglycerol cysteine lipidation.

Belongs to the FlgH family. In terms of assembly, the basal body constitutes a major portion of the flagellar organelle and consists of four rings (L,P,S, and M) mounted on a central rod.

The protein localises to the cell outer membrane. The protein resides in the bacterial flagellum basal body. Its function is as follows. Assembles around the rod to form the L-ring and probably protects the motor/basal body from shearing forces during rotation. The chain is Flagellar L-ring protein 2 from Chromobacterium violaceum (strain ATCC 12472 / DSM 30191 / JCM 1249 / CCUG 213 / NBRC 12614 / NCIMB 9131 / NCTC 9757 / MK).